The chain runs to 199 residues: Thymidine kinase (199 aa).

Residues 15–22 (GSMFSGKS) and 88–91 (DEVQ) contribute to the ATP site. Glu-89 functions as the Proton acceptor in the catalytic mechanism. Positions 145, 148, 183, and 186 each coordinate Zn(2+).

It belongs to the thymidine kinase family. In terms of assembly, homotetramer.

It is found in the cytoplasm. The enzyme catalyses thymidine + ATP = dTMP + ADP + H(+). This Staphylococcus aureus (strain Mu50 / ATCC 700699) protein is Thymidine kinase.